A 222-amino-acid chain; its full sequence is Small ribosomal subunit protein uS3 (222 aa).

Residues Ile-39–Lys-108 enclose the KH type-2 domain.

Belongs to the universal ribosomal protein uS3 family. As to quaternary structure, part of the 30S ribosomal subunit. Forms a tight complex with proteins S10 and S14.

Binds the lower part of the 30S subunit head. Binds mRNA in the 70S ribosome, positioning it for translation. This Caldicellulosiruptor saccharolyticus (strain ATCC 43494 / DSM 8903 / Tp8T 6331) protein is Small ribosomal subunit protein uS3.